Reading from the N-terminus, the 178-residue chain is Caveolin-1 (178 aa).

Serine 2 carries the post-translational modification N-acetylserine. Serine 2 carries the post-translational modification Phosphoserine. A required for homooligomerization region spans residues 2-94; the sequence is SGGKYVDSEG…WKASFTTFTV (93 aa). Residues 2 to 104 lie on the Cytoplasmic side of the membrane; it reads SGGKYVDSEG…TKYWFYRLLS (103 aa). Lysine 5 carries the post-translational modification N6-acetyllysine; alternate. Lysine 5 participates in a covalent cross-link: Glycyl lysine isopeptide (Lys-Gly) (interchain with G-Cter in ubiquitin); alternate. Tyrosine 6 carries the phosphotyrosine modification. At serine 9 the chain carries Phosphoserine. Residue tyrosine 14 is modified to Phosphotyrosine; by ABL1. Residue tyrosine 25 is modified to Phosphotyrosine. Glycyl lysine isopeptide (Lys-Gly) (interchain with G-Cter in ubiquitin) cross-links involve residues lysine 26, lysine 30, lysine 39, lysine 47, and lysine 57. The segment at 82-94 is interaction with CAVIN3; it reads DGIWKASFTTFTV. The segment at residues 105–125 is an intramembrane region (helical); it reads ALFGIPMALIWGIYFAILSFL. Residues 126-178 lie on the Cytoplasmic side of the membrane; that stretch reads HIWAVVPCIKSFLIEIQCISRVYSIYVHTFCDPLFEAIGKIFSNVRINLQKEI. An interacts with SPRY1, SPRY2, SPRY3 and SPRY4 region spans residues 131-142; sequence VPCIKSFLIEIQ. S-palmitoyl cysteine attachment occurs at residues cysteine 133, cysteine 143, and cysteine 156. The segment at 149–160 is interacts with SPRY1, SPRY2, and SPRY4; sequence SIYVHTFCDPLF. The interacts with SPRY1, SPRY2, SPRY3 and SPRY4 stretch occupies residues 167–178; the sequence is FSNVRINLQKEI.

It belongs to the caveolin family. In terms of assembly, homooligomer. Interacts with GLIPR2. Interacts with NOSTRIN. Interacts with SNAP25 and STX1A. Interacts (via the N-terminus) with DPP4; the interaction is direct. Interacts with CTNNB1, CDH1 and JUP. Interacts with PACSIN2; this interaction induces membrane tubulation. Interacts with SLC7A9. Interacts with BMX and BTK. Interacts with TGFBR1. Interacts with CAVIN3 (via leucine-zipper domain) in a cholesterol-sensitive manner. Interacts with CAVIN1. Interacts with EHD2 in a cholesterol-dependent manner. Forms a ternary complex with UBXN6 and VCP; mediates CAV1 targeting to lysosomes for degradation. Interacts with ABCG1; this interaction regulates ABCG1-mediated cholesterol efflux. Interacts with NEU3; this interaction enhances NEU3 sialidase activity within caveola. Interacts (via C-terminus) with SPRY1, SPRY2 (via C-terminus), SPRY3, and SPRY4. Interacts with IGFBP5; this interaction allows trafficking of IGFBP5 from the plasma membrane to the nucleus. Phosphorylated at Tyr-14 by ABL1 in response to oxidative stress. In terms of processing, ubiquitinated. Undergo monoubiquitination and multi- and/or polyubiquitination. Monoubiquitination of N-terminal lysines promotes integration in a ternary complex with UBXN6 and VCP which promotes oligomeric CAV1 targeting to lysosomes for degradation. Ubiquitinated by ZNRF1; leading to degradation and modulation of the TLR4-mediated immune response.

It is found in the golgi apparatus membrane. The protein resides in the cell membrane. The protein localises to the membrane. It localises to the caveola. Its subcellular location is the membrane raft. Its function is as follows. May act as a scaffolding protein within caveolar membranes. Forms a stable heterooligomeric complex with CAV2 that targets to lipid rafts and drives caveolae formation. Mediates the recruitment of CAVIN proteins (CAVIN1/2/3/4) to the caveolae. Interacts directly with G-protein alpha subunits and can functionally regulate their activity. Involved in the costimulatory signal essential for T-cell receptor (TCR)-mediated T-cell activation. Its binding to DPP4 induces T-cell proliferation and NF-kappa-B activation in a T-cell receptor/CD3-dependent manner. Recruits CTNNB1 to caveolar membranes and may regulate CTNNB1-mediated signaling through the Wnt pathway. Negatively regulates TGFB1-mediated activation of SMAD2/3 by mediating the internalization of TGFBR1 from membrane rafts leading to its subsequent degradation. Binds 20(S)-hydroxycholesterol (20(S)-OHC). The polypeptide is Caveolin-1 (CAV1) (Equus caballus (Horse)).